Consider the following 1065-residue polypeptide: N-terminal acetyltransferase B complex auxiliary subunit NAA25 (1065 aa).

One copy of the TPR repeat lies at 294-327 (VDKLRIQGRLLARANDYSAAVDVYKKILELSPDD).

The protein belongs to the MDM20/NAA25 family. Ubiquitously expressed, with a higher expression in vascular bundles, hydathodes, leaf primordia and the base of the trichomes.

The protein resides in the cytoplasm. Its function is as follows. Auxiliary subunit of the NatB N-alpha-acetyltransferase complex. Required for flowering time regulation and for vegetative and reproductive plant development. The chain is N-terminal acetyltransferase B complex auxiliary subunit NAA25 from Arabidopsis thaliana (Mouse-ear cress).